A 361-amino-acid chain; its full sequence is Phospho-N-acetylmuramoyl-pentapeptide-transferase (361 aa).

10 helical membrane passes run 28-48, 74-94, 99-119, 133-153, 168-188, 203-223, 236-256, 263-283, 288-308, and 338-358; these read LAII…IKFL, TMGG…LADL, IWIT…DDYA, SKFL…EYLD, LSLD…VGSS, VPIA…GNLI, TGEL…FLWF, VFMG…ISVI, IVLA…ILQV, and KVVI…LSSL.

It belongs to the glycosyltransferase 4 family. MraY subfamily. Mg(2+) is required as a cofactor.

It localises to the cell inner membrane. The catalysed reaction is UDP-N-acetyl-alpha-D-muramoyl-L-alanyl-gamma-D-glutamyl-meso-2,6-diaminopimeloyl-D-alanyl-D-alanine + di-trans,octa-cis-undecaprenyl phosphate = di-trans,octa-cis-undecaprenyl diphospho-N-acetyl-alpha-D-muramoyl-L-alanyl-D-glutamyl-meso-2,6-diaminopimeloyl-D-alanyl-D-alanine + UMP. It functions in the pathway cell wall biogenesis; peptidoglycan biosynthesis. Catalyzes the initial step of the lipid cycle reactions in the biosynthesis of the cell wall peptidoglycan: transfers peptidoglycan precursor phospho-MurNAc-pentapeptide from UDP-MurNAc-pentapeptide onto the lipid carrier undecaprenyl phosphate, yielding undecaprenyl-pyrophosphoryl-MurNAc-pentapeptide, known as lipid I. This chain is Phospho-N-acetylmuramoyl-pentapeptide-transferase, found in Rickettsia prowazekii (strain Madrid E).